A 151-amino-acid polypeptide reads, in one-letter code: Superoxide dismutase [Cu-Zn] (151 aa).

A lipid anchor (S-palmitoyl cysteine) is attached at Cys6. 3 residues coordinate Cu cation: His45, His47, and His62. Cys56 and Cys144 are joined by a disulfide. Zn(2+) is bound by residues His62, His70, His79, and Asp82. Residue His118 participates in Cu cation binding.

The protein belongs to the Cu-Zn superoxide dismutase family. In terms of assembly, homodimer. Cu cation serves as cofactor. It depends on Zn(2+) as a cofactor.

It localises to the cytoplasm. It is found in the nucleus. It catalyses the reaction 2 superoxide + 2 H(+) = H2O2 + O2. Its function is as follows. Destroys radicals which are normally produced within the cells and which are toxic to biological systems. This chain is Superoxide dismutase [Cu-Zn] (sod1), found in Xenopus tropicalis (Western clawed frog).